Reading from the N-terminus, the 867-residue chain is Leucine--tRNA ligase (867 aa).

The 'HIGH' region motif lies at 42–52; that stretch reads PYPSGKLHMGH. Residues 631–635 carry the 'KMSKS' region motif; that stretch reads KMSKS. K634 contributes to the ATP binding site.

The protein belongs to the class-I aminoacyl-tRNA synthetase family.

The protein resides in the cytoplasm. The enzyme catalyses tRNA(Leu) + L-leucine + ATP = L-leucyl-tRNA(Leu) + AMP + diphosphate. This chain is Leucine--tRNA ligase, found in Dichelobacter nodosus (strain VCS1703A).